Reading from the N-terminus, the 295-residue chain is Biliverdin reductase A (295 aa).

Residues 1-2 (MS) constitute a propeptide that is removed on maturation. NAD(+) is bound by residues 18-19 (RA), 76-79 (SSSH), and Tyr-97. At Ser-154 the chain carries Phosphoserine. Ser-167 is an NAD(+) binding site. A Phosphothreonine modification is found at Thr-173. Phosphoserine is present on residues Ser-177 and Ser-229. 2 positions are modified to N6-acetyllysine: Lys-247 and Lys-252. Zn(2+)-binding residues include His-279, Cys-280, Cys-291, and His-292.

Belongs to the Gfo/Idh/MocA family. Biliverdin reductase subfamily. As to quaternary structure, monomer. Requires Zn(2+) as cofactor.

The protein localises to the cytoplasm. Its subcellular location is the cytosol. It carries out the reaction (4Z,15Z)-bilirubin IXalpha + NAD(+) = biliverdin IXalpha + NADH + H(+). The enzyme catalyses (4Z,15Z)-bilirubin IXalpha + NADP(+) = biliverdin IXalpha + NADPH + H(+). The protein operates within porphyrin-containing compound metabolism; protoheme degradation. Functionally, reduces the gamma-methene bridge of the open tetrapyrrole, biliverdin IXalpha, to bilirubin with the concomitant oxidation of a NADH or NADPH cofactor. Does not reduce bilirubin IXbeta. Uses the reactants NADH or NADPH depending on the pH; NADH is used at the acidic pH range (6-6.9) and NADPH at the alkaline range (8.5-8.7). NADPH, however, is the probable reactant in biological systems. The sequence is that of Biliverdin reductase A from Mus musculus (Mouse).